Consider the following 265-residue polypeptide: Phosphonates import ATP-binding protein PhnC (265 aa).

An ABC transporter domain is found at 3-247 (LRLKQAFLHH…MLDTLYANEQ (245 aa)). 36 to 43 (GPSGAGKS) contacts ATP.

The protein belongs to the ABC transporter superfamily. Phosphonates importer (TC 3.A.1.9.1) family. The complex is composed of two ATP-binding proteins (PhnC), two transmembrane proteins (PhnE) and a solute-binding protein (PhnD).

The protein localises to the cell inner membrane. It carries out the reaction phosphonate(out) + ATP + H2O = phosphonate(in) + ADP + phosphate + H(+). Its function is as follows. Part of the ABC transporter complex PhnCDE involved in phosphonates import. Responsible for energy coupling to the transport system. This Pseudomonas fluorescens (strain Pf0-1) protein is Phosphonates import ATP-binding protein PhnC.